A 345-amino-acid chain; its full sequence is Phosphate acyltransferase (345 aa).

It belongs to the PlsX family. As to quaternary structure, homodimer. Probably interacts with PlsY.

It is found in the cytoplasm. The catalysed reaction is a fatty acyl-[ACP] + phosphate = an acyl phosphate + holo-[ACP]. Its pathway is lipid metabolism; phospholipid metabolism. Catalyzes the reversible formation of acyl-phosphate (acyl-PO(4)) from acyl-[acyl-carrier-protein] (acyl-ACP). This enzyme utilizes acyl-ACP as fatty acyl donor, but not acyl-CoA. This is Phosphate acyltransferase from Dichelobacter nodosus (strain VCS1703A).